Reading from the N-terminus, the 299-residue chain is Class II hydrophobin C (299 aa).

An N-terminal signal peptide occupies residues 1–17 (MKFLTVAAAIFASTSLA). N39, N78, and N91 each carry an N-linked (GlcNAc...) asparagine glycan. Intrachain disulfides connect C232/C281, C242/C272, C243/C255, and C282/C293.

The protein belongs to the cerato-ulmin hydrophobin family.

The protein localises to the secreted. It is found in the cell wall. Its subcellular location is the vacuole. It localises to the cytoplasmic vesicle. Functionally, aerial growth, conidiation, and dispersal of filamentous fungi in the environment rely upon a capability of their secreting small amphipathic proteins called hydrophobins (HPBs) with low sequence identity. Class I can self-assemble into an outermost layer of rodlet bundles on aerial cell surfaces, conferring cellular hydrophobicity that supports fungal growth, development and dispersal; whereas Class II form highly ordered films at water-air interfaces through intermolecular interactions but contribute nothing to the rodlet structure. Hyd2C contributes to certain cell wall-related features, such as hydrophobicity but is not involved in cell wall-related events during fungal proliferation in host hemocoel. Does not contribute to conidial hydrophobicity. Involved actively in the asexual development. The protein is Class II hydrophobin C of Beauveria bassiana (strain ARSEF 2860) (White muscardine disease fungus).